The chain runs to 677 residues: Threonine--tRNA ligase (677 aa).

The 59-residue stretch at 1–59 (MAQATISITVNGEAKEVEATTTGVELFAEDKNIIAVKINGENRDLYTPLNDGDTVDPIA) folds into the TGS domain. Residues 255–561 (DHRKLGAEMD…LLEHYAGAFP (307 aa)) are catalytic. Residues Cys-360, His-411, and His-538 each coordinate Zn(2+).

It belongs to the class-II aminoacyl-tRNA synthetase family. As to quaternary structure, homodimer. The cofactor is Zn(2+).

It is found in the cytoplasm. It catalyses the reaction tRNA(Thr) + L-threonine + ATP = L-threonyl-tRNA(Thr) + AMP + diphosphate + H(+). In terms of biological role, catalyzes the attachment of threonine to tRNA(Thr) in a two-step reaction: L-threonine is first activated by ATP to form Thr-AMP and then transferred to the acceptor end of tRNA(Thr). Also edits incorrectly charged L-seryl-tRNA(Thr). This chain is Threonine--tRNA ligase, found in Bifidobacterium longum (strain DJO10A).